The chain runs to 216 residues: MKALALLFVLSLYLLPNPAHSKFNPIRLRPAHETASSETPVLDINGDEVRAGENYYIVSAIWGAGGGGLRLVRLDSSSNECASDVIVSRSDFDNGDPITITPADPEATVVMPSTYQTFRFNIATNKLCVNNVNWGIKHDSESGQYFVKAGEFVSDNSNQFKIEVVNDNLNAYKISYCQFGTEKCFNVGRYYDPLTRATRLALSNTPFVFVIKPTDM.

An N-terminal signal peptide occupies residues 1–21 (MKALALLFVLSLYLLPNPAHS).

This sequence belongs to the protease inhibitor I3 (leguminous Kunitz-type inhibitor) family. Accumulates specifically in tuberous roots and tubers upon tuberization. Sporamin accounts 60 to 80% of the total soluble protein of the organ.

Its subcellular location is the vacuole. In terms of biological role, major tuberous root protein. The chain is Sporamin B (GSPO-B1) from Ipomoea batatas (Sweet potato).